We begin with the raw amino-acid sequence, 324 residues long: Heparan sulfate 2-O-sulfotransferase hst-2 (324 aa).

Topologically, residues 1 to 6 (MLWKKR) are cytoplasmic. The helical; Signal-anchor for type II membrane protein transmembrane segment at 7 to 24 (KVLYFAGISVFILILLLL) threads the bilayer. Over 25 to 324 (KLNSKPKANV…QYHFEKIKPS (300 aa)) the chain is Lumenal. Residues N75 and N94 are each glycosylated (N-linked (GlcNAc...) asparagine). Residues H107 and H109 contribute to the active site. A glycan (N-linked (GlcNAc...) asparagine) is linked at N161. 2 disulfides stabilise this stretch: C167-C175 and C188-C194.

This sequence belongs to the sulfotransferase 3 family. Homotrimer. In terms of tissue distribution, present in the hypodermis, muscle, distal tip cells (DTCs) and in neurons (at protein level).

The protein resides in the golgi apparatus membrane. Its function is as follows. Catalyzes the transfer of sulfate to the C2-position of selected hexuronic acid residues within the maturing heparan sulfate (HS). Involved in cell adhesion and guidance by specifically modifying proteoglycans in the extracellular matrix and on the cell surface that are essential for axon migrations. In Caenorhabditis elegans, this protein is Heparan sulfate 2-O-sulfotransferase hst-2.